A 362-amino-acid polypeptide reads, in one-letter code: Porin Omp2b (362 aa).

Residues 1-22 form the signal peptide; that stretch reads MNIKSLLLGSAAALVAASGAQA.

It belongs to the alphaproteobacteria porin family. As to quaternary structure, homotrimer.

It localises to the cell outer membrane. Its function is as follows. Forms passive diffusion pores that allow small molecular weight hydrophilic materials across the outer membrane. This Brucella canis (strain ATCC 23365 / NCTC 10854 / RM-666) protein is Porin Omp2b (omp2b).